The sequence spans 750 residues: Photosystem I P700 chlorophyll a apoprotein A1 (750 aa).

8 helical membrane passes run Val70–Ala93, Leu156–His179, Leu195–Leu219, Ile291–Tyr309, Trp346–Tyr369, Leu385–Val411, Ala433–His455, and Phe531–Leu549. Cys573 and Cys582 together coordinate [4Fe-4S] cluster. 2 helical membrane passes run His589–Trp610 and Leu664–Phe686. A chlorophyll a'-binding site is contributed by His675. Chlorophyll a-binding residues include Met683 and Tyr691. Trp692 is a binding site for phylloquinone. The helical transmembrane segment at Ala724 to Ala744 threads the bilayer.

Belongs to the PsaA/PsaB family. In terms of assembly, the PsaA/B heterodimer binds the P700 chlorophyll special pair and subsequent electron acceptors. PSI consists of a core antenna complex that captures photons, and an electron transfer chain that converts photonic excitation into a charge separation. The eukaryotic PSI reaction center is composed of at least 11 subunits. The cofactor is P700 is a chlorophyll a/chlorophyll a' dimer, A0 is one or more chlorophyll a, A1 is one or both phylloquinones and FX is a shared 4Fe-4S iron-sulfur center..

It is found in the plastid. The protein resides in the chloroplast thylakoid membrane. The catalysed reaction is reduced [plastocyanin] + hnu + oxidized [2Fe-2S]-[ferredoxin] = oxidized [plastocyanin] + reduced [2Fe-2S]-[ferredoxin]. Functionally, psaA and PsaB bind P700, the primary electron donor of photosystem I (PSI), as well as the electron acceptors A0, A1 and FX. PSI is a plastocyanin-ferredoxin oxidoreductase, converting photonic excitation into a charge separation, which transfers an electron from the donor P700 chlorophyll pair to the spectroscopically characterized acceptors A0, A1, FX, FA and FB in turn. Oxidized P700 is reduced on the lumenal side of the thylakoid membrane by plastocyanin. In Coffea arabica (Arabian coffee), this protein is Photosystem I P700 chlorophyll a apoprotein A1.